A 1072-amino-acid polypeptide reads, in one-letter code: Neurofilament heavy polypeptide (1072 aa).

Ser-74 is subject to Phosphoserine. The IF rod domain maps to 94-409 (EKEQLQALND…KLLEGEECRI (316 aa)). Coiled coils occupy residues 98-132 (LQALNDRFAGYIDKVRQLEAHNRTLEGEAAALRQQ), 174-222 (IAHV…LQEE), and 293-380 (LDRL…QLRE). A 55 X 6 AA approximate tandem repeats of K-S-P-[VAGSE]-[KEVTSGA]-[EAVK] region spans residues 278 to 643 (TVQSTLQSEE…AKSPAEAKSP (366 aa)). Phosphoserine is present on residues Ser-343, Ser-414, and Ser-417. The disordered stretch occupies residues 454 to 1072 (EEQTEEIQVT…PEDKAAKGDK (619 aa)). Acidic residues predominate over residues 455 to 487 (EQTEEIQVTEEVTEEEDKEAQGEEEEEAEEGGE). Positions 488–499 (EAATTSPPAEEA) are enriched in low complexity. Ser-501 carries the phosphoserine modification. The span at 501 to 584 (SPEKETKSPV…KSPAEAKSPA (84 aa)) shows a compositional bias: basic and acidic residues. A run of 36 repeats spans residues 507–512 (KSPVKE), 515–520 (KSPAEA), 521–526 (KSPAEA), 527–532 (KSPAEA), 533–538 (KSPAEV), 539–544 (KSPAEV), 545–550 (KSPAEA), 551–556 (KSPAEA), 557–562 (KSPAEV), 563–568 (KSPAEV), 569–574 (KSPAEA), 575–580 (KSPAEA), 581–586 (KSPAEV), 587–592 (KSPATV), 593–598 (KSPGEA), 599–604 (KSPAEA), 605–610 (KSPAEV), 611–616 (KSPVEA), 617–622 (KSPAEA), 623–628 (KSPASV), 629–634 (KSPGEA), 635–640 (KSPAEA), 641–646 (KSPAEV), 647–652 (KSPATV), 653–658 (KSPVEA), 659–664 (KSPAEV), 665–670 (KSPVTV), 671–676 (KSPAEA), 677–682 (KSPVEV), 683–688 (KSPASV), 689–694 (KSPSEA), 695–700 (KSPAGA), 701–706 (KSPAEA), 707–712 (KSPVVA), 713–718 (KSPAEA), and 719–724 (KSPAEA). 37 positions are modified to phosphoserine: Ser-516, Ser-522, Ser-528, Ser-534, Ser-540, Ser-546, Ser-552, Ser-558, Ser-564, Ser-570, Ser-576, Ser-582, Ser-588, Ser-594, Ser-600, Ser-606, Ser-612, Ser-618, Ser-624, Ser-627, Ser-630, Ser-636, Ser-642, Ser-648, Ser-654, Ser-660, Ser-666, Ser-672, Ser-678, Ser-684, Ser-687, Ser-690, Ser-696, Ser-702, Ser-708, Ser-714, and Ser-720. A compositionally biased stretch (basic and acidic residues) spans 600-620 (SPAEAKSPAEVKSPVEAKSPA). Residues 621–631 (EAKSPASVKSP) show a composition bias toward low complexity. The segment covering 720 to 774 (SPAEAKPPAEAKSPAEAKSPAEAKSPAEAKSPAEAKSPVEVKSPEKAKSPVKEGA) has biased composition (basic and acidic residues). One copy of the 37; approximate repeat lies at 725–730 (KPPAEA). 7 repeat units span residues 731-736 (KSPAEA), 737-742 (KSPAEA), 743-748 (KSPAEA), 749-754 (KSPAEA), 755-760 (KSPVEV), 761-766 (KSPEKA), and 767-772 (KSPVKE). Phosphoserine occurs at positions 732, 738, 744, 750, 756, and 762. Residues 775 to 780 (KSLAEA) form a 45; approximate repeat. Phosphoserine is present on residues Ser-776, Ser-782, and Ser-788. Tandem repeats lie at residues 781-786 (KSPEKA) and 787-792 (KSPVKE). Basic and acidic residues-rich tracts occupy residues 781–953 (KSPE…KAAA) and 963–1072 (GVKE…KGDK). The 48; approximate repeat unit spans residues 795 to 800 (KPPAEV). 4 repeat units span residues 801 to 806 (KSPEKA), 807 to 812 (KSPMKE), 815 to 820 (KSPEKA), and 826 to 831 (KSPEAK). A phosphoserine mark is found at Ser-802, Ser-808, Ser-816, and Ser-827. Position 832 is a phosphothreonine (Thr-832). A phosphoserine mark is found at Ser-846, Ser-852, Ser-860, Ser-880, and Ser-937. 3 repeat units span residues 851–856 (KSPAKE), 859–864 (KSPEKE), and 879–884 (KSPVEE).

This sequence belongs to the intermediate filament family. In terms of assembly, forms heterodimers with NEFL; which can further hetero-oligomerize (in vitro). Forms heterodimers with INA (in vitro). There are a number of repeats of the tripeptide K-S-P, NFH is phosphorylated on a number of the serines in this motif. It is thought that phosphorylation of NFH results in the formation of interfilament cross bridges that are important in the maintenance of axonal caliber. Post-translationally, phosphorylation seems to play a major role in the functioning of the larger neurofilament polypeptides (NF-M and NF-H), the levels of phosphorylation being altered developmentally and coincidentally with a change in the neurofilament function. In terms of processing, phosphorylated in the head and rod regions by the PKC kinase PKN1, leading to the inhibition of polymerization. As to expression, expressed in the dorsal root ganglion neurons (at protein level). Expressed in cutaneous and muscular sensory neurons.

The protein localises to the cytoplasm. It localises to the cytoskeleton. It is found in the cell projection. Its subcellular location is the axon. Functionally, neurofilaments usually contain three intermediate filament proteins: NEFL, NEFM, and NEFH which are involved in the maintenance of neuronal caliber. NEFH has an important function in mature axons that is not subserved by the two smaller NEF proteins. May additionally cooperate with the neuronal intermediate filament proteins PRPH and INA to form neuronal filamentous networks. This Rattus norvegicus (Rat) protein is Neurofilament heavy polypeptide (Nefh).